The primary structure comprises 454 residues: Bifunctional protein GlmU (454 aa).

The interval Met1–Pro228 is pyrophosphorylase. UDP-N-acetyl-alpha-D-glucosamine contacts are provided by residues Leu10–Gly13, Lys24, Gln76, Gly81–Thr82, Tyr103–Asp105, Gly138, Glu153, Asn168, and Asn226. Mg(2+) is bound at residue Asp105. Asn226 provides a ligand contact to Mg(2+). Residues Trp229 to Gln249 form a linker region. The segment at Gly250–Lys454 is N-acetyltransferase. Residues Arg332 and Lys350 each contribute to the UDP-N-acetyl-alpha-D-glucosamine site. The active-site Proton acceptor is the His362. 2 residues coordinate UDP-N-acetyl-alpha-D-glucosamine: Tyr365 and Asn376. Acetyl-CoA is bound by residues Ala379, Asn385–Tyr386, Ser404, Ala422, and Arg439.

This sequence in the N-terminal section; belongs to the N-acetylglucosamine-1-phosphate uridyltransferase family. In the C-terminal section; belongs to the transferase hexapeptide repeat family. Homotrimer. It depends on Mg(2+) as a cofactor.

It localises to the cytoplasm. The catalysed reaction is alpha-D-glucosamine 1-phosphate + acetyl-CoA = N-acetyl-alpha-D-glucosamine 1-phosphate + CoA + H(+). It catalyses the reaction N-acetyl-alpha-D-glucosamine 1-phosphate + UTP + H(+) = UDP-N-acetyl-alpha-D-glucosamine + diphosphate. The protein operates within nucleotide-sugar biosynthesis; UDP-N-acetyl-alpha-D-glucosamine biosynthesis; N-acetyl-alpha-D-glucosamine 1-phosphate from alpha-D-glucosamine 6-phosphate (route II): step 2/2. It functions in the pathway nucleotide-sugar biosynthesis; UDP-N-acetyl-alpha-D-glucosamine biosynthesis; UDP-N-acetyl-alpha-D-glucosamine from N-acetyl-alpha-D-glucosamine 1-phosphate: step 1/1. Its pathway is bacterial outer membrane biogenesis; LPS lipid A biosynthesis. Catalyzes the last two sequential reactions in the de novo biosynthetic pathway for UDP-N-acetylglucosamine (UDP-GlcNAc). The C-terminal domain catalyzes the transfer of acetyl group from acetyl coenzyme A to glucosamine-1-phosphate (GlcN-1-P) to produce N-acetylglucosamine-1-phosphate (GlcNAc-1-P), which is converted into UDP-GlcNAc by the transfer of uridine 5-monophosphate (from uridine 5-triphosphate), a reaction catalyzed by the N-terminal domain. This chain is Bifunctional protein GlmU, found in Xanthomonas euvesicatoria pv. vesicatoria (strain 85-10) (Xanthomonas campestris pv. vesicatoria).